A 268-amino-acid polypeptide reads, in one-letter code: WUSCHEL-related homeobox 11 (268 aa).

The disordered stretch occupies residues 1–35 (MDQEQTPHSPTRHSRSPPSSASGSTSAEPVRSRWS). The segment covering 16–27 (SPPSSASGSTSA) has biased composition (low complexity). Positions 29 to 93 (PVRSRWSPKP…NRRSRSRRRQ (65 aa)) form a DNA-binding region, homeobox; WUS-type.

This sequence belongs to the WUS homeobox family.

The protein resides in the nucleus. Transcription factor which may be involved in developmental processes. This is WUSCHEL-related homeobox 11 (WOX11) from Arabidopsis thaliana (Mouse-ear cress).